The following is a 607-amino-acid chain: MEEVTRSVLAEEILKRLDLENLCSVACVSTTLRSAVVSGVLPSLTSLDLSVFSPDDETLNHVLRGCIGLSSLTLNCLRLNAASVRGVLGPHLRELHLLRCSLLSSTVLTYIGTLCPNLRVLTLEMADLDSPDVFQSNLTQMLNGCPYLESLQLNIRGILVDATAFQSVRFSLPETLKALRLQPLLESEAILLMNRFKVTGTYLSQPDYNSALLSPSPSFTLQSLSLVLDLISDRLIIAITGSLPQLVKLDLEDRPEKEPFPDNDLTYTGLQALGFCQQLTSLSLVRTCYNRKISFKRINDMGIFLLSEACKGLESVRLGGFPKVSDAGFASLLHSCRNLKKFEVRGAFLLSDLAFHDVTGSSCSLQEVRLSTCPLITSEAVKKLGLCGNLEVLDLGSCKSISDSCLNSVSALRKLTSLNLAGADVTDSGMLALGKSDVPITQLSLRGCRRVSDRGISYLLNNEGTISKTLSTLDLGHMPGISDRAIHTITHCCKALTELSIRSCFHVTDSSIESLATWERQAEGGSKQLRKLNVHNCVSLTTGALRWLSKPSFAGLHWLGMGQTRFAGRKETVTAMICGQRPWLTLCFDGCELGCSDGWEFHTPQRH.

Residues 9–47 (LAEEILKRLDLENLCSVACVSTTLRSAVVSGVLPSLTSL) form the F-box domain. LRR repeat units lie at residues 51–76 (VFSP…TLNC), 77–99 (LRLN…HLLR), 100–125 (CSLL…TLEM), 130–155 (SPDV…QLNI), 228–253 (LDLI…DLED), 262–286 (DNDL…SLVR), 295–320 (FKRI…RLGG), 321–346 (FPKV…EVRG), 347–372 (AFLL…RLST), 373–397 (CPLI…DLGS), 398–422 (CKSI…NLAG), 424–447 (DVTD…SLRG), 448–477 (CRRV…DLGH), 478–503 (MPGI…SIRS), 504–536 (CFHV…NVHN), and 537–563 (CVSL…GMGQ).

This Arabidopsis thaliana (Mouse-ear cress) protein is F-box protein At-B (ATB).